Reading from the N-terminus, the 248-residue chain is MPVKLSVNLNAVAMLRNRRDLPWPSVTALGRIALGAGAHGLTVHPRPDQRHIRFSDLPHIRALIDDEFPDREFNIEGYPSEDFLRLVEETQPEQVTLVPDDPSQATSDHGWQFQEHERFLAAAVGRLKRRGFRVSLFADPDADEAALAVAKAVGADRVELYTGPYGACYDDAEKAAKELRKLEKTAKTAQGLGLAVNAGHDLTVANLPALVEHVPSLAEVSIGHALTADALEYGMAETVRRYLSACEA.

3-amino-2-oxopropyl phosphate is bound by residues N8 and R19. H44 serves as the catalytic Proton acceptor. Residues R46 and H51 each coordinate 1-deoxy-D-xylulose 5-phosphate. E76 acts as the Proton acceptor in catalysis. T106 contacts 1-deoxy-D-xylulose 5-phosphate. H200 acts as the Proton donor in catalysis. Residues D201 and 223-224 (GH) contribute to the 3-amino-2-oxopropyl phosphate site.

This sequence belongs to the PNP synthase family. As to quaternary structure, homooctamer; tetramer of dimers.

The protein resides in the cytoplasm. The enzyme catalyses 3-amino-2-oxopropyl phosphate + 1-deoxy-D-xylulose 5-phosphate = pyridoxine 5'-phosphate + phosphate + 2 H2O + H(+). It participates in cofactor biosynthesis; pyridoxine 5'-phosphate biosynthesis; pyridoxine 5'-phosphate from D-erythrose 4-phosphate: step 5/5. Functionally, catalyzes the complicated ring closure reaction between the two acyclic compounds 1-deoxy-D-xylulose-5-phosphate (DXP) and 3-amino-2-oxopropyl phosphate (1-amino-acetone-3-phosphate or AAP) to form pyridoxine 5'-phosphate (PNP) and inorganic phosphate. This is Pyridoxine 5'-phosphate synthase from Chelativorans sp. (strain BNC1).